The sequence spans 122 residues: Small ribosomal subunit protein uS13 (122 aa).

The segment at 98-122 (VRGQRTHTNARTRKGPAKAIAGKKK) is disordered.

The protein belongs to the universal ribosomal protein uS13 family. As to quaternary structure, part of the 30S ribosomal subunit. Forms a loose heterodimer with protein S19. Forms two bridges to the 50S subunit in the 70S ribosome.

In terms of biological role, located at the top of the head of the 30S subunit, it contacts several helices of the 16S rRNA. In the 70S ribosome it contacts the 23S rRNA (bridge B1a) and protein L5 of the 50S subunit (bridge B1b), connecting the 2 subunits; these bridges are implicated in subunit movement. Contacts the tRNAs in the A and P-sites. The polypeptide is Small ribosomal subunit protein uS13 (Ruegeria pomeroyi (strain ATCC 700808 / DSM 15171 / DSS-3) (Silicibacter pomeroyi)).